The sequence spans 325 residues: Beta-ketoacyl-[acyl-carrier-protein] synthase III (325 aa).

Active-site residues include Cys119 and His252. Residues 253 to 257 form an ACP-binding region; sequence QANLR. The active site involves Asn282.

This sequence belongs to the thiolase-like superfamily. FabH family. In terms of assembly, homodimer.

It is found in the cytoplasm. It catalyses the reaction malonyl-[ACP] + acetyl-CoA + H(+) = 3-oxobutanoyl-[ACP] + CO2 + CoA. It functions in the pathway lipid metabolism; fatty acid biosynthesis. In terms of biological role, catalyzes the condensation reaction of fatty acid synthesis by the addition to an acyl acceptor of two carbons from malonyl-ACP. Catalyzes the first condensation reaction which initiates fatty acid synthesis and may therefore play a role in governing the total rate of fatty acid production. Possesses both acetoacetyl-ACP synthase and acetyl transacylase activities. Its substrate specificity determines the biosynthesis of branched-chain and/or straight-chain of fatty acids. The sequence is that of Beta-ketoacyl-[acyl-carrier-protein] synthase III from Polaromonas naphthalenivorans (strain CJ2).